A 429-amino-acid polypeptide reads, in one-letter code: MELVINPVKKLRGNVSVPGDKSISHRAVMVGALAQGITEVSNFLMGEDCLATVKCLRAMGVSIEGPTNGKLKIYGVGLQGLREPADLLDTGNSGTTTRLLMGILAGQPFTSIITGDQSLKKRPMARVTKPLQDMGASFLGRNQNNLLPMAVQGGKLKPIDFHSPVASAQVKSAVLFAGLFAEGYTSVTEPAVSRDHSERMLKAFGAEVEVKNQTVRIKGLPQLKGMKITVPGDISSAAFLMVAAAILPGSDITIQGVGINPTRDGILEVLKQMGAGIEIMHSRLQGGEPVGDIRIKGAELQGTELSGPIIPRLIDEIPIIAVAAAYARGTTVIRDASELKVKESNRISSVVRELRKFGATVEELSDGLIIQGGTPLSGAVCQSYGDHRMAMAMAVAGLAASGQTLIEQADCIPVSFPGFSDVLKEVIVE.

3 residues coordinate 3-phosphoshikimate: lysine 21, serine 22, and arginine 26. Lysine 21 contacts phosphoenolpyruvate. Phosphoenolpyruvate is bound by residues glycine 94 and arginine 122. 3-phosphoshikimate is bound by residues serine 167, glutamine 169, aspartate 315, and lysine 342. Glutamine 169 is a phosphoenolpyruvate binding site. Aspartate 315 (proton acceptor) is an active-site residue. 2 residues coordinate phosphoenolpyruvate: arginine 346 and arginine 388.

Belongs to the EPSP synthase family. As to quaternary structure, monomer.

It localises to the cytoplasm. It catalyses the reaction 3-phosphoshikimate + phosphoenolpyruvate = 5-O-(1-carboxyvinyl)-3-phosphoshikimate + phosphate. It participates in metabolic intermediate biosynthesis; chorismate biosynthesis; chorismate from D-erythrose 4-phosphate and phosphoenolpyruvate: step 6/7. Its function is as follows. Catalyzes the transfer of the enolpyruvyl moiety of phosphoenolpyruvate (PEP) to the 5-hydroxyl of shikimate-3-phosphate (S3P) to produce enolpyruvyl shikimate-3-phosphate and inorganic phosphate. This Desulforamulus reducens (strain ATCC BAA-1160 / DSM 100696 / MI-1) (Desulfotomaculum reducens) protein is 3-phosphoshikimate 1-carboxyvinyltransferase.